The chain runs to 260 residues: NH(3)-dependent NAD(+) synthetase (260 aa).

31–38 (GLSGGLDS) lines the ATP pocket. Residue Asp37 coordinates Mg(2+). Residue Arg112 coordinates deamido-NAD(+). ATP is bound at residue Thr132. Glu137 provides a ligand contact to Mg(2+). ATP-binding residues include Lys161 and Ser183.

Belongs to the NAD synthetase family. As to quaternary structure, homodimer.

The catalysed reaction is deamido-NAD(+) + NH4(+) + ATP = AMP + diphosphate + NAD(+) + H(+). The protein operates within cofactor biosynthesis; NAD(+) biosynthesis; NAD(+) from deamido-NAD(+) (ammonia route): step 1/1. Catalyzes the ATP-dependent amidation of deamido-NAD to form NAD. Uses ammonia as a nitrogen source. The sequence is that of NH(3)-dependent NAD(+) synthetase from Helicobacter acinonychis (strain Sheeba).